The primary structure comprises 372 residues: MDYGLDLEYSFNEFLKGFGLSSEIAHIIWLPLPMLLVLVAAVVGVLVTVWLERKISAAAQQRIGPEYAGALGVLQPIADGLKLLVKEDIIPAKADGILFTAGPILVLVPVILSWLIVPFGQNLLISNVGIGIFLWIALSSIQPIGLLMSGYASNNKYSLLGGLRAAAQSISYEIPLALSVLAIVLMTNSLSTIDIVNQQSGAGILSWNIWRQPVGFIVFWICALAECERLPFDLPEAEEELVAGYQTEYAGMKFALFYLGSYINLILSALLVSILYLGGWGFPIPVELIAKFLNLPINAPLIQVFTASIGIVMTVLKAYLLVFIAILLRWTTPRVRIDQLLDLGWKFLLPISLANLLITAGLKLAFPQFFGG.

The next 8 membrane-spanning stretches (helical) occupy residues 27 to 47 (IIWL…GVLV), 97 to 117 (ILFT…WLIV), 128 to 148 (VGIG…GLLM), 176 to 196 (LALS…IDIV), 204 to 224 (ILSW…ICAL), 266 to 286 (ILSA…PIPV), 308 to 328 (SIGI…AILL), and 347 to 367 (FLLP…LAFP).

It belongs to the complex I subunit 1 family. NDH-1 is composed of at least 11 different subunits.

Its subcellular location is the cellular thylakoid membrane. The catalysed reaction is a plastoquinone + NADH + (n+1) H(+)(in) = a plastoquinol + NAD(+) + n H(+)(out). The enzyme catalyses a plastoquinone + NADPH + (n+1) H(+)(in) = a plastoquinol + NADP(+) + n H(+)(out). Its function is as follows. NDH-1 shuttles electrons from an unknown electron donor, via FMN and iron-sulfur (Fe-S) centers, to quinones in the respiratory and/or the photosynthetic chain. The immediate electron acceptor for the enzyme in this species is believed to be plastoquinone. Couples the redox reaction to proton translocation, and thus conserves the redox energy in a proton gradient. This Prochlorococcus marinus (strain MIT 9215) protein is NAD(P)H-quinone oxidoreductase subunit 1.